Reading from the N-terminus, the 393-residue chain is Bifunctional chrysanthemol synthase, chloroplastic (393 aa).

The segment covering 1 to 18 (MACSSSLSSKWASWGASS) has biased composition (low complexity). Residues 1–22 (MACSSSLSSKWASWGASSRPHP) form a disordered region. The N-terminal 53 residues, 1–53 (MACSSSLSSKWASWGASSRPHPSVQPFVTRKNVVRYHKPTSELSYSPLTTTLS), are a transit peptide targeting the chloroplast. Dimethylallyl diphosphate contacts are provided by K99, R102, and Q137. Mg(2+) contacts are provided by D144 and D148. R153, R154, K241, Q280, D287, K297, and K306 together coordinate dimethylallyl diphosphate.

The protein belongs to the FPP/GGPP synthase family. The cofactor is Mg(2+). Restricted to glandular trichomes during achene maturation. Expressed in flowers and in both ray and disk florets.

The protein localises to the plastid. Its subcellular location is the chloroplast. It catalyses the reaction 2 dimethylallyl diphosphate = (R,R)-chrysanthemyl diphosphate + diphosphate. It carries out the reaction (R,R)-chrysanthemyl diphosphate + H2O = (R,R)-chrysanthemol + diphosphate. The catalysed reaction is (R)-lavandulyl diphosphate + H2O = (R)-lavandulol + diphosphate. Its pathway is isoprenoid biosynthesis. Its function is as follows. Component of the monoterpenoid pyrethrins biosynthesis; pyrethrins are widely used plant-derived pesticide. Catalyzes the condensation of two molecules of dimethylallyl diphosphate to produce chrysanthemyl diphosphate (CPP), a monoterpene with a non-head-to-tail or irregular c1'-2-3 linkage between isoprenoid units. In a second step, hydrolyzes the diphosphate moiety of CPP to form chrysanthemol. With a lower efficiency, can also converts dimethylallyl diphosphate into lavandulyl diphosphate (LPP), and subsequently LPP into lavandulol. The chain is Bifunctional chrysanthemol synthase, chloroplastic from Tanacetum cinerariifolium (Dalmatian daisy).